The chain runs to 245 residues: tRNA (guanine-N(1)-)-methyltransferase (245 aa).

S-adenosyl-L-methionine contacts are provided by residues glycine 111 and 130-135 (IGDYVL).

Belongs to the RNA methyltransferase TrmD family. Homodimer.

It is found in the cytoplasm. It carries out the reaction guanosine(37) in tRNA + S-adenosyl-L-methionine = N(1)-methylguanosine(37) in tRNA + S-adenosyl-L-homocysteine + H(+). Specifically methylates guanosine-37 in various tRNAs. This Dictyoglomus turgidum (strain DSM 6724 / Z-1310) protein is tRNA (guanine-N(1)-)-methyltransferase.